The chain runs to 164 residues: Peptide methionine sulfoxide reductase MsrA (164 aa).

Cysteine 16 is an active-site residue.

This sequence belongs to the MsrA Met sulfoxide reductase family.

It catalyses the reaction L-methionyl-[protein] + [thioredoxin]-disulfide + H2O = L-methionyl-(S)-S-oxide-[protein] + [thioredoxin]-dithiol. The catalysed reaction is [thioredoxin]-disulfide + L-methionine + H2O = L-methionine (S)-S-oxide + [thioredoxin]-dithiol. Has an important function as a repair enzyme for proteins that have been inactivated by oxidation. Catalyzes the reversible oxidation-reduction of methionine sulfoxide in proteins to methionine. In Methanoculleus marisnigri (strain ATCC 35101 / DSM 1498 / JR1), this protein is Peptide methionine sulfoxide reductase MsrA.